Consider the following 192-residue polypeptide: dTTP/UTP pyrophosphatase (192 aa).

The Proton acceptor role is filled by aspartate 75.

It belongs to the Maf family. YhdE subfamily. A divalent metal cation serves as cofactor.

Its subcellular location is the cytoplasm. It carries out the reaction dTTP + H2O = dTMP + diphosphate + H(+). The enzyme catalyses UTP + H2O = UMP + diphosphate + H(+). Its function is as follows. Nucleoside triphosphate pyrophosphatase that hydrolyzes dTTP and UTP. May have a dual role in cell division arrest and in preventing the incorporation of modified nucleotides into cellular nucleic acids. This chain is dTTP/UTP pyrophosphatase, found in Pelodictyon phaeoclathratiforme (strain DSM 5477 / BU-1).